An 86-amino-acid polypeptide reads, in one-letter code: Cell division topological specificity factor (86 aa).

The protein belongs to the MinE family.

Its function is as follows. Prevents the cell division inhibition by proteins MinC and MinD at internal division sites while permitting inhibition at polar sites. This ensures cell division at the proper site by restricting the formation of a division septum at the midpoint of the long axis of the cell. The chain is Cell division topological specificity factor from Alteromonas mediterranea (strain DSM 17117 / CIP 110805 / LMG 28347 / Deep ecotype).